We begin with the raw amino-acid sequence, 143 residues long: ATP synthase F(0) complex subunit C2, mitochondrial (143 aa).

A mitochondrion-targeting transit peptide spans 1–68 (MYTCAKFVST…RSFQTSAISR (68 aa)). Residues 84 to 104 (VGVAGSGAGIGTVFGSLIIGY) traverse the membrane as a helical segment. N6,N6,N6-trimethyllysine is present on Lys-111. The helical transmembrane segment at 119-139 (ILGFALSEAMGLFCLMVAFLI) threads the bilayer.

The protein belongs to the ATPase C chain family. As to quaternary structure, F-type ATPases have 2 components, CF(1) - the catalytic core - and CF(0) - the membrane proton channel. CF(1) has five subunits: alpha(3), beta(3), gamma(1), delta(1), epsilon(1). CF(0) has three main subunits: a, b and c. Interacts with DNAJC30; interaction is direct. In terms of processing, trimethylated by ATPSCKMT at Lys-111. Methylation is required for proper incorporation of the C subunit into the ATP synthase complex and mitochondrial respiration.

It is found in the mitochondrion membrane. Functionally, mitochondrial membrane ATP synthase (F(1)F(0) ATP synthase or Complex V) produces ATP from ADP in the presence of a proton gradient across the membrane which is generated by electron transport complexes of the respiratory chain. F-type ATPases consist of two structural domains, F(1) - containing the extramembraneous catalytic core and F(0) - containing the membrane proton channel, linked together by a central stalk and a peripheral stalk. During catalysis, ATP synthesis in the catalytic domain of F(1) is coupled via a rotary mechanism of the central stalk subunits to proton translocation. Part of the complex F(0) domain. A homomeric c-ring of probably 10 subunits is part of the complex rotary element. In Ovis aries (Sheep), this protein is ATP synthase F(0) complex subunit C2, mitochondrial.